A 293-amino-acid chain; its full sequence is Small ribosomal subunit biogenesis GTPase RsgA 2 (293 aa).

The CP-type G domain occupies 63 to 223; it reads SNELVRPPIA…VADTPGFSVL (161 aa). Residues 112 to 115 and 166 to 174 each bind GTP; these read TKVD and GQSGVGKSS. Zn(2+) contacts are provided by Cys-247, Cys-252, His-254, and Cys-260.

The protein belongs to the TRAFAC class YlqF/YawG GTPase family. RsgA subfamily. In terms of assembly, monomer. Associates with 30S ribosomal subunit, binds 16S rRNA. Zn(2+) is required as a cofactor.

The protein localises to the cytoplasm. Functionally, one of several proteins that assist in the late maturation steps of the functional core of the 30S ribosomal subunit. Helps release RbfA from mature subunits. May play a role in the assembly of ribosomal proteins into the subunit. Circularly permuted GTPase that catalyzes slow GTP hydrolysis, GTPase activity is stimulated by the 30S ribosomal subunit. This Oceanobacillus iheyensis (strain DSM 14371 / CIP 107618 / JCM 11309 / KCTC 3954 / HTE831) protein is Small ribosomal subunit biogenesis GTPase RsgA 2.